Consider the following 132-residue polypeptide: uncharacterized protein (132 aa).

The signal sequence occupies residues 1–35; that stretch reads MSFEYRHYKREAKICTCRGGWAHVLLCIGVSQGAC. Positions 91–132 are disordered; sequence AHPGSHSDQPPGVPSRRKSRLERWSPSVSRSTSPPTEAPFCL. Residues 115 to 125 are compositionally biased toward low complexity; the sequence is SPSVSRSTSPP.

It localises to the secreted. This is an uncharacterized protein from Homo sapiens (Human).